Consider the following 458-residue polypeptide: ATP synthase subunit beta (458 aa).

Position 148–155 (148–155 (GGAGVGKT)) interacts with ATP.

Belongs to the ATPase alpha/beta chains family. F-type ATPases have 2 components, CF(1) - the catalytic core - and CF(0) - the membrane proton channel. CF(1) has five subunits: alpha(3), beta(3), gamma(1), delta(1), epsilon(1). CF(0) has three main subunits: a(1), b(2) and c(9-12). The alpha and beta chains form an alternating ring which encloses part of the gamma chain. CF(1) is attached to CF(0) by a central stalk formed by the gamma and epsilon chains, while a peripheral stalk is formed by the delta and b chains.

It is found in the cell inner membrane. The catalysed reaction is ATP + H2O + 4 H(+)(in) = ADP + phosphate + 5 H(+)(out). Functionally, produces ATP from ADP in the presence of a proton gradient across the membrane. The catalytic sites are hosted primarily by the beta subunits. The sequence is that of ATP synthase subunit beta from Actinobacillus succinogenes (strain ATCC 55618 / DSM 22257 / CCUG 43843 / 130Z).